A 132-amino-acid polypeptide reads, in one-letter code: ATP synthase epsilon chain (132 aa).

This sequence belongs to the ATPase epsilon chain family. In terms of assembly, F-type ATPases have 2 components, CF(1) - the catalytic core - and CF(0) - the membrane proton channel. CF(1) has five subunits: alpha(3), beta(3), gamma(1), delta(1), epsilon(1). CF(0) has three main subunits: a, b and c.

The protein localises to the cell inner membrane. Functionally, produces ATP from ADP in the presence of a proton gradient across the membrane. The chain is ATP synthase epsilon chain from Jannaschia sp. (strain CCS1).